Here is a 353-residue protein sequence, read N- to C-terminus: Peroxidase 34 (353 aa).

An N-terminal signal peptide occupies residues 1 to 30 (MHFSSSSTSSTWTILITLGCLMLHASLSAA). Gln-31 is modified (pyrrolidone carboxylic acid). 4 disulfides stabilise this stretch: Cys-41–Cys-121, Cys-74–Cys-79, Cys-127–Cys-331, and Cys-207–Cys-239. Asn-43 carries an N-linked (GlcNAc...) asparagine glycan. His-72 acts as the Proton acceptor in catalysis. The Ca(2+) site is built by Asp-73, Val-76, Gly-78, Asp-80, and Ser-82. Asn-87 carries N-linked (GlcNAc...) asparagine glycosylation. Substrate is bound at residue Pro-169. Residue His-200 participates in heme b binding. Position 201 (Thr-201) interacts with Ca(2+). N-linked (GlcNAc...) asparagine glycans are attached at residues Asn-216, Asn-228, and Asn-244. Ca(2+) is bound by residues Asp-252, Thr-255, and Asp-260. Asn-285 is a glycosylation site (N-linked (GlcNAc...) asparagine).

This sequence belongs to the peroxidase family. Classical plant (class III) peroxidase subfamily. The cofactor is heme b. It depends on Ca(2+) as a cofactor. In terms of tissue distribution, preferentially expressed in roots, but also detected in flowers, leaves and stems.

Its subcellular location is the secreted. The protein resides in the vacuole. The enzyme catalyses 2 a phenolic donor + H2O2 = 2 a phenolic radical donor + 2 H2O. Functionally, removal of H(2)O(2), oxidation of toxic reductants, biosynthesis and degradation of lignin, suberization, auxin catabolism, response to environmental stresses such as wounding, pathogen attack and oxidative stress. These functions might be dependent on each isozyme/isoform in each plant tissue. May be implicated in the systemic acquired resistance response via the salicylic acid signal transduction pathway. Exhibits a Ca(2+)-pectate binding affinity which could be interpreted in vivo as a specificity to interact with the pectic structure of the cell wall. This Arabidopsis thaliana (Mouse-ear cress) protein is Peroxidase 34 (PER34).